A 229-amino-acid polypeptide reads, in one-letter code: Ribonuclease T (229 aa).

Residues 23–197 (VIIDVETAGF…YDTERTAKLF (175 aa)) enclose the Exonuclease domain. 4 residues coordinate Mg(2+): Asp-26, Glu-28, His-184, and Asp-189. His-184 functions as the Proton donor/acceptor in the catalytic mechanism.

It belongs to the RNase T family. Homodimer. Requires Mg(2+) as cofactor.

In terms of biological role, trims short 3' overhangs of a variety of RNA species, leaving a one or two nucleotide 3' overhang. Responsible for the end-turnover of tRNA: specifically removes the terminal AMP residue from uncharged tRNA (tRNA-C-C-A). Also appears to be involved in tRNA biosynthesis. This chain is Ribonuclease T, found in Haemophilus influenzae (strain PittGG).